Here is a 230-residue protein sequence, read N- to C-terminus: Phosphoribosylformylglycinamidine synthase subunit PurQ (230 aa).

Positions 3 to 230 constitute a Glutamine amidotransferase type-1 domain; that stretch reads SAIIVFPGTN…LFQSIVESLS (228 aa). C87 serves as the catalytic Nucleophile. Catalysis depends on residues H204 and E206.

Part of the FGAM synthase complex composed of 1 PurL, 1 PurQ and 2 PurS subunits.

Its subcellular location is the cytoplasm. The enzyme catalyses N(2)-formyl-N(1)-(5-phospho-beta-D-ribosyl)glycinamide + L-glutamine + ATP + H2O = 2-formamido-N(1)-(5-O-phospho-beta-D-ribosyl)acetamidine + L-glutamate + ADP + phosphate + H(+). It catalyses the reaction L-glutamine + H2O = L-glutamate + NH4(+). It participates in purine metabolism; IMP biosynthesis via de novo pathway; 5-amino-1-(5-phospho-D-ribosyl)imidazole from N(2)-formyl-N(1)-(5-phospho-D-ribosyl)glycinamide: step 1/2. Functionally, part of the phosphoribosylformylglycinamidine synthase complex involved in the purines biosynthetic pathway. Catalyzes the ATP-dependent conversion of formylglycinamide ribonucleotide (FGAR) and glutamine to yield formylglycinamidine ribonucleotide (FGAM) and glutamate. The FGAM synthase complex is composed of three subunits. PurQ produces an ammonia molecule by converting glutamine to glutamate. PurL transfers the ammonia molecule to FGAR to form FGAM in an ATP-dependent manner. PurS interacts with PurQ and PurL and is thought to assist in the transfer of the ammonia molecule from PurQ to PurL. This chain is Phosphoribosylformylglycinamidine synthase subunit PurQ, found in Rhodospirillum rubrum (strain ATCC 11170 / ATH 1.1.1 / DSM 467 / LMG 4362 / NCIMB 8255 / S1).